We begin with the raw amino-acid sequence, 424 residues long: Trigger factor (424 aa).

In terms of domain architecture, PPIase FKBP-type spans 163-248 (GDTVVLDFEG…IHEIKAKELP (86 aa)).

The protein belongs to the FKBP-type PPIase family. Tig subfamily.

Its subcellular location is the cytoplasm. The enzyme catalyses [protein]-peptidylproline (omega=180) = [protein]-peptidylproline (omega=0). Its function is as follows. Involved in protein export. Acts as a chaperone by maintaining the newly synthesized protein in an open conformation. Functions as a peptidyl-prolyl cis-trans isomerase. The protein is Trigger factor of Bacillus licheniformis (strain ATCC 14580 / DSM 13 / JCM 2505 / CCUG 7422 / NBRC 12200 / NCIMB 9375 / NCTC 10341 / NRRL NRS-1264 / Gibson 46).